Reading from the N-terminus, the 175-residue chain is Lithostathine (175 aa).

The signal sequence occupies residues 1 to 26 (MLPSLGLPRLSWMLLSCLMLLSQIQG). The propeptide occupies 27 to 37 (ENSQKELPSAR). One can recognise a C-type lectin domain in the interval 38–173 (ISCPSGSMAY…NLNLPYVCKF (136 aa)). Disulfide bonds link C40-C51, C68-C171, and C146-C163.

Cleaved to give an A chain and a B chain joined by a disulfide bond. As to expression, in pancreatic acinar cells.

It localises to the secreted. Its function is as follows. Might act as an inhibitor of spontaneous calcium carbonate precipitation. The chain is Lithostathine (PTP) from Bos taurus (Bovine).